A 498-amino-acid polypeptide reads, in one-letter code: Archaemetzincin-1 (498 aa).

Histidine 261 contributes to the Zn(2+) binding site. Glutamate 262 (proton acceptor) is an active-site residue. Zn(2+)-binding residues include histidine 265, cysteine 272, cysteine 277, cysteine 296, and cysteine 299. The disordered stretch occupies residues glutamine 332–proline 381.

Belongs to the peptidase M54 family. The cofactor is Zn(2+).

In terms of biological role, probable zinc metalloprotease. In Homo sapiens (Human), this protein is Archaemetzincin-1 (AMZ1).